The primary structure comprises 2276 residues: Poly [ADP-ribose] polymerase tankyrase (2276 aa).

Basic residues-rich tracts occupy residues 1 to 15 (MARRVNKKKSPVKAA) and 87 to 98 (KAVKAPKVKAPS). Disordered regions lie at residues 1-20 (MARRVNKKKSPVKAARKIDG) and 79-103 (SSKTGQKVKAVKAPKVKAPSKKGND). ANK repeat units lie at residues 345–374 (KNITPLHTAAISNSTHMLEAMRAVYPTINI), 378–407 (DNWYTMHYAACAPGTAPMEFLLKNGGSVTM), 411–440 (QTETPLHVAARAGRAVNCTFLMKEMLDLEK), 461–490 (SGNSALHLAVLRNNLDVVDALLAEPTIVVD), 498–527 (NRLTPLMMACGKGYLEMAKKLVEKGALVEG), 531–560 (KKRTPLIHAMLNGQIHTAAFLLAKGASLTL), 564–593 (SGNTAAHYAAAYGFLDCLKLLASIDDNILS), 598–627 (WQLYPLSVAYLKGHYGIVTWLLEGPHKDKA), 675–725 (SGQT…KVDV), 729–758 (EDNTPLHYALTNGNLMLFNLMLDKVANKRN), 970–999 (KDDVLIVQAIMFDKPNVVELILDTASEMHL), 1171–1200 (NGNTILHLAAIKNSTICLMTLIRKKCHVDL), 1204–1233 (DGNTPLALAVHHGRQSSALTLIQANADVTE), 1472–1501 (GLIPPISFAVLQENPNMIRALRNAGASLKT), and 1505–1535 (YGRTPLMYAIMTNNRSVVDAIVGDGKLAVVL). The tract at residues 1570–1649 (VPARVESDEE…STGPKRKKLV (80 aa)) is disordered. 2 stretches are compositionally biased toward acidic residues: residues 1576–1590 (SDEEEEDNSGSESGE) and 1612–1622 (SDDEDDDDDDS). Residues 1662 to 1706 (KENNPLHYFIEPLAWENVELLGDLAAANKTAIVQCLIDKRSPNPI) form an ANK 16 repeat. Residues 1788 to 1889 (GLVSFCDETQ…ANFRDMPKKY (102 aa)) form the WGR domain. A PARP alpha-helical domain is found at 1910-2045 (KNTEKDPIRR…EIETATRLLC (136 aa)). Positions 2047–2276 (AEFRQDLDRV…VLPKYIVMYK (230 aa)) constitute a PARP catalytic domain.

Expressed throughout the head and tail, in germ cells and somatic cells.

It localises to the nucleus. The protein resides in the chromosome. It catalyses the reaction NAD(+) + (ADP-D-ribosyl)n-acceptor = nicotinamide + (ADP-D-ribosyl)n+1-acceptor + H(+).. The catalysed reaction is L-aspartyl-[protein] + NAD(+) = 4-O-(ADP-D-ribosyl)-L-aspartyl-[protein] + nicotinamide. It carries out the reaction L-glutamyl-[protein] + NAD(+) = 5-O-(ADP-D-ribosyl)-L-glutamyl-[protein] + nicotinamide. In terms of biological role, poly[ADP-ribose] polymerases modify various nuclear proteins by poly(ADP-ribosyl)ation, a post-translational modification synthesized after DNA damage that appears as an obligatory step in a detection/signaling pathway leading to the reparation of DNA strand breaks and programmed cell death. The protein is Poly [ADP-ribose] polymerase tankyrase of Caenorhabditis elegans.